Here is a 468-residue protein sequence, read N- to C-terminus: Bifunctional protein HldE (468 aa).

Residues 1-315 (MAKKVEILVV…ELLRSRANAE (315 aa)) form a ribokinase region. An ATP-binding site is contributed by 192–195 (NRKE). Asp260 is an active-site residue. The segment at 340-468 (FTNGCFDILH…IVKRIKDADK (129 aa)) is cytidylyltransferase.

This sequence in the N-terminal section; belongs to the carbohydrate kinase PfkB family. In the C-terminal section; belongs to the cytidylyltransferase family. In terms of assembly, homodimer.

The catalysed reaction is D-glycero-beta-D-manno-heptose 7-phosphate + ATP = D-glycero-beta-D-manno-heptose 1,7-bisphosphate + ADP + H(+). It carries out the reaction D-glycero-beta-D-manno-heptose 1-phosphate + ATP + H(+) = ADP-D-glycero-beta-D-manno-heptose + diphosphate. Its pathway is nucleotide-sugar biosynthesis; ADP-L-glycero-beta-D-manno-heptose biosynthesis; ADP-L-glycero-beta-D-manno-heptose from D-glycero-beta-D-manno-heptose 7-phosphate: step 1/4. The protein operates within nucleotide-sugar biosynthesis; ADP-L-glycero-beta-D-manno-heptose biosynthesis; ADP-L-glycero-beta-D-manno-heptose from D-glycero-beta-D-manno-heptose 7-phosphate: step 3/4. Its function is as follows. Catalyzes the phosphorylation of D-glycero-D-manno-heptose 7-phosphate at the C-1 position to selectively form D-glycero-beta-D-manno-heptose-1,7-bisphosphate. In terms of biological role, catalyzes the ADP transfer from ATP to D-glycero-beta-D-manno-heptose 1-phosphate, yielding ADP-D-glycero-beta-D-manno-heptose. This is Bifunctional protein HldE from Campylobacter curvus (strain 525.92).